Here is a 345-residue protein sequence, read N- to C-terminus: Dimethyladenosine transferase 1, mitochondrial (345 aa).

Residues 1 to 27 constitute a mitochondrion transit peptide; sequence MAASGKLGTFRLPPLPTIREIIKLFGL. S-adenosyl-L-methionine-binding residues include L38, G63, E85, K86, D111, V112, and N141.

The protein belongs to the class I-like SAM-binding methyltransferase superfamily. rRNA adenine N(6)-methyltransferase family. KsgA subfamily. As to quaternary structure, interacts with mitochondrial RNA polymerase POLRMT. Interacts with TFAM. Remains bound to the maturing mtSSU until the late stages of assembly. As to expression, ubiquitously expressed.

It is found in the mitochondrion. It catalyses the reaction adenosine(N)/adenosine(N+1) in rRNA + 4 S-adenosyl-L-methionine = N(6)-dimethyladenosine(N)/N(6)-dimethyladenosine(N+1) in rRNA + 4 S-adenosyl-L-homocysteine + 4 H(+). Functionally, mitochondrial methyltransferase which uses S-adenosyl methionine to dimethylate two highly conserved adjacent adenosine residues (A1006 and A1007) within the loop of helix 45 at the 3-prime end of 12S rRNA, thereby regulating the assembly or stability of the small subunit of the mitochondrial ribosome. Also required for basal transcription of mitochondrial DNA, probably via its interaction with POLRMT and TFAM. Stimulates transcription independently of the methyltransferase activity. The sequence is that of Dimethyladenosine transferase 1, mitochondrial (Tfb1m) from Mus musculus (Mouse).